We begin with the raw amino-acid sequence, 439 residues long: tRNA modification GTPase MnmE (439 aa).

(6S)-5-formyl-5,6,7,8-tetrahydrofolate is bound by residues Arg23, Glu80, and Lys120. In terms of domain architecture, TrmE-type G spans 217–365 (GLKIVIAGEP…LLTALQSHLP (149 aa)). Asn227 provides a ligand contact to K(+). GTP contacts are provided by residues 227–232 (NAGKSS), 246–252 (TEVAGTT), and 271–274 (DTAG). Residue Ser231 participates in Mg(2+) binding. K(+) is bound by residues Thr246, Val248, and Thr251. Thr252 serves as a coordination point for Mg(2+). Lys439 contacts (6S)-5-formyl-5,6,7,8-tetrahydrofolate.

This sequence belongs to the TRAFAC class TrmE-Era-EngA-EngB-Septin-like GTPase superfamily. TrmE GTPase family. Homodimer. Heterotetramer of two MnmE and two MnmG subunits. K(+) serves as cofactor.

The protein resides in the cytoplasm. Its function is as follows. Exhibits a very high intrinsic GTPase hydrolysis rate. Involved in the addition of a carboxymethylaminomethyl (cmnm) group at the wobble position (U34) of certain tRNAs, forming tRNA-cmnm(5)s(2)U34. In Rhizobium meliloti (strain 1021) (Ensifer meliloti), this protein is tRNA modification GTPase MnmE.